We begin with the raw amino-acid sequence, 117 residues long: Acrylate reductase cytochrome subunit (117 aa).

The first 22 residues, 1–22 (MKMYKLMLGLVLAGLVSLSAQA), serve as a signal peptide directing secretion. Positions 29, 37, 40, 41, 54, 57, 58, 79, 83, 90, 93, 94, 97, 104, 107, and 108 each coordinate heme c.

In terms of assembly, the ArdAB flavocytochrome c is composed of a FAD-containing subunit (ArdA) and a heme c-containing subunit (ArdB). The cofactor is heme c.

The protein localises to the periplasm. Methacrylate acts as a competitive inhibitor of the acrylate reductase activity and suppresses the reductase activity in dose-dependent manner. Its function is as follows. Heme c-containing subunit of the ArdAB flavocytochrome c, which catalyzes the reduction of acrylate to propanoate and supports dimethylsulfoniopropionate-dependent anaerobic respiration. In vitro, can use the artificial electron donor methyl viologen. The natural electron donor is probably a low-potential cytochrome c. Also shows weak activity toward methacrylate in vitro (at a 22-fold lower rate) but cannot use other tested 2-enoates, including crotonic, fumaric, sorbic, urocanic, cinnamic, p-coumaric, caffeic or ferulic acids. The protein catalyzes a unidirectional reaction and cannot oxidize propanoate with phenazine metasulfate and dichlorophenolindophenol as electron acceptors. The protein is Acrylate reductase cytochrome subunit of Shewanella woodyi (strain ATCC 51908 / MS32).